The chain runs to 1177 residues: Solute carrier family 9 member C1 (1177 aa).

The Extracellular portion of the chain corresponds to 1-17; that stretch reads MAGIFKEFFFSTEDLPE. The chain crosses the membrane as a helical span at residues 18–37; sequence VILTLSLISSIGAFLNRHLE. Residues 38 to 42 lie on the Cytoplasmic side of the membrane; it reads DFPIP. A helical transmembrane segment spans residues 43-60; sequence VPVILFLLGCSFEVLSFT. Topologically, residues 61-76 are extracellular; sequence SSQVQRYANAIQWMSP. A helical membrane pass occupies residues 77 to 93; sequence DLFFRIFTPVVFFTTAF. The Cytoplasmic segment spans residues 94–103; it reads DMDTYMLQKL. The chain crosses the membrane as a helical span at residues 104–129; the sequence is FWQILLISIPGFLVNYILVLWHLASV. The transport core domain stretch occupies residues 104–191; sequence FWQILLISIP…SLITFTSIMD (88 aa). Residues 130–135 are Extracellular-facing; sequence NQLLLK. A helical transmembrane segment spans residues 136-161; sequence PTQWLLFSAILVSSDPMLTAAAIRDL. At 162–164 the chain is on the cytoplasmic side; that stretch reads GLS. The chain crosses the membrane as a helical span at residues 165–190; it reads RSLISLINGESLMTSVISLITFTSIM. At 191-204 the chain is on the extracellular side; the sequence is DFDQRLQSKRNHTL. Residues 205–236 form a helical membrane-spanning segment; the sequence is AEEIVGGICSYIIASFLFGILSSKLIQFWMST. At 237 to 240 the chain is on the cytoplasmic side; that stretch reads VFGD. Residues 241–262 form a helical membrane-spanning segment; it reads DVNHISLIFSILYLIFYICELV. Topologically, residues 263 to 265 are extracellular; it reads GMS. A helical transmembrane segment spans residues 266–279; it reads GIFTLAIVGLLLNS. Over 280–286 the chain is Cytoplasmic; it reads TSFKAAI. A helical transmembrane segment spans residues 287–319; that stretch reads EETLLLEFWTFLSRIAFLMVFTFFGLLIPAHTY. Topologically, residues 320–324 are extracellular; it reads LYIEF. A helical membrane pass occupies residues 325–354; sequence VDIYYSLNIYLTLIVLRFLTLLLISPVLSR. The interval 325–426 is transport core domain; the sequence is VDIYYSLNIY…FILPVAVTIL (102 aa). The Cytoplasmic portion of the chain corresponds to 355–360; sequence VGHEFS. Residues 361–391 traverse the membrane as a helical segment; it reads WRWIFIMVCSEMKGMPNINMALLLAYSDLYF. Over 392–395 the chain is Extracellular; the sequence is GSDK. The helical transmembrane segment at 396–426 threads the bilayer; it reads EKSQILFHGVLVCLITLVVNRFILPVAVTIL. The Cytoplasmic portion of the chain corresponds to 427–612; it reads GLRDATSTKY…ICHTIVFTEE (186 aa). The segment at 598–678 is ion transport-like; that stretch reads YFFFRICHTI…DFFSHAWNIF (81 aa). Residues 613-633 traverse the membrane as a helical segment; that stretch reads FEHVGYLVILMNIFPFIISWI. At 634 to 637 the chain is on the extracellular side; that stretch reads SQLN. Residues 638 to 664 form a helical membrane-spanning segment; sequence VIYHSELKHTNYCFLTLYILEALLKIA. The Cytoplasmic segment spans residues 665 to 671; sequence AMRKDFF. The chain crosses the membrane as a helical span at residues 672–696; the sequence is SHAWNIFELAITLIGILHVILIEID. Residues 697-704 lie on the Extracellular side of the membrane; sequence TIKYIFNE. A helical transmembrane segment spans residues 705–731; that stretch reads TEVIVFIKVVQFFRILRIFKLIAPKLL. Residues 732–1177 lie on the Cytoplasmic side of the membrane; that stretch reads QIIDKRMSHQ…RINLRKVRKE (446 aa).

This sequence belongs to the monovalent cation:proton antiporter 1 (CPA1) transporter (TC 2.A.36) family. Interacts with soluble adenylyl cyclase (sAC). Sperm.

Its subcellular location is the cell projection. The protein localises to the cilium. The protein resides in the flagellum membrane. In terms of biological role, sperm-specific solute carrier involved in intracellular pH regulation of spermatozoa. Required for sperm motility and fertility. Involved in sperm cell hyperactivation, a step needed for sperm motility which is essential late in the preparation of sperm for fertilization. Required for the expression and bicarbonate regulation of the soluble adenylyl cyclase (sAC). This Homo sapiens (Human) protein is Solute carrier family 9 member C1 (SLC9C1).